Here is a 48-residue protein sequence, read N- to C-terminus: ATP synthase protein 8 (48 aa).

A helical transmembrane segment spans residues 13 to 32 (VVFTLISLSFIFFVFSKYIL).

This sequence belongs to the ATPase protein 8 family. In terms of assembly, F-type ATPases have 2 components, CF(1) - the catalytic core - and CF(0) - the membrane proton channel.

The protein resides in the mitochondrion membrane. In terms of biological role, mitochondrial membrane ATP synthase (F(1)F(0) ATP synthase or Complex V) produces ATP from ADP in the presence of a proton gradient across the membrane which is generated by electron transport complexes of the respiratory chain. F-type ATPases consist of two structural domains, F(1) - containing the extramembraneous catalytic core and F(0) - containing the membrane proton channel, linked together by a central stalk and a peripheral stalk. During catalysis, ATP synthesis in the catalytic domain of F(1) is coupled via a rotary mechanism of the central stalk subunits to proton translocation. Part of the complex F(0) domain. Minor subunit located with subunit a in the membrane. This Trichophyton rubrum (Athlete's foot fungus) protein is ATP synthase protein 8 (ATP8).